Reading from the N-terminus, the 250-residue chain is Probable aquaporin TIP2-2 (250 aa).

Met1 bears the N-acetylmethionine mark. Topologically, residues 1-24 (MVKIEIGSVGDSFSVASLKAYLSE) are cytoplasmic. Lys3 carries the post-translational modification N6,N6-dimethyllysine. A helical transmembrane segment spans residues 25 to 45 (FIATLLFVFAGVGSALAFAKL). The Vacuolar segment spans residues 46–53 (TSDAALDP). A helical transmembrane segment spans residues 54-74 (AGLVAVAVAHAFALFVGVSIA). The Cytoplasmic segment spans residues 75–101 (ANISGGHLNPAVTLGLAVGGNITVITG). The NPA 1 signature appears at 83-85 (NPA). Residues 102–122 (FFYWIAQCLGSIVACLLLVFV) traverse the membrane as a helical segment. At 123 to 133 (TNGESVPTHGV) the chain is on the vacuolar side. The chain crosses the membrane as a helical span at residues 134-154 (AAGLGAIEGVVMEIVVTFALV). Topologically, residues 155 to 168 (YTVYATAADPKKGS) are cytoplasmic. A helical membrane pass occupies residues 169–189 (LGTIAPIAIGFIVGANILAAG). Residues 190-210 (PFSGGSMNPARSFGPAVVSGD) are Vacuolar-facing. Positions 197 to 199 (NPA) match the NPA 2 motif. Residues 211-231 (FSQIWIYWVGPLVGGALAGLI) form a helical membrane-spanning segment. Residues 232-250 (YGDVFIGSYAPAPTTESYP) lie on the Cytoplasmic side of the membrane. Ser248 is modified (phosphoserine).

This sequence belongs to the MIP/aquaporin (TC 1.A.8) family. TIP (TC 1.A.8.10) subfamily. Interacts with cucumber mosaic virus (CMV) Protein 1a. In terms of tissue distribution, expressed above groung and in roots.

It localises to the vacuole membrane. Its function is as follows. Aquaporins facilitate the transport of water and small neutral solutes across cell membranes. The protein is Probable aquaporin TIP2-2 (TIP2-2) of Arabidopsis thaliana (Mouse-ear cress).